A 687-amino-acid polypeptide reads, in one-letter code: Probable intron-encoded endonuclease aI3 (687 aa).

The tract at residues 1–374 (MKQMSYVTRW…NASMDVAFHD (374 aa)) is COX1 exons 1 to 3 encoded. A run of 10 helical transmembrane segments spans residues 19 to 39 (IGMT…GMSV), 69 to 89 (LLMM…NFFL), 103 to 123 (LNNI…CSVL), 152 to 172 (AMFA…NFMV), 188 to 208 (PLFA…LPVL), 240 to 260 (LFWF…FGVM), 273 to 293 (FGEM…FLVW), 315 to 335 (MVIA…IYGG), 341 to 361 (VPML…LTGV), and 376 to 396 (IFIY…NNYT). A COX1 intron 3 encoded region spans residues 375–687 (RIFIYYVSFF…KKESLMKFLK (313 aa)).

The protein in the C-terminal section; belongs to the LAGLIDADG endonuclease family. This sequence in the N-terminal section; belongs to the heme-copper respiratory oxidase family. The mature protein may arise from proteolytic cleavage of an in-frame translation of COX1 exons 1 to 3 plus intron 3, containing the aI3 open reading frame.

It localises to the mitochondrion. Its subcellular location is the membrane. Its function is as follows. Mitochondrial DNA endonuclease involved in intron homing. The polypeptide is Probable intron-encoded endonuclease aI3 (aI3) (Debaryomyces hansenii (strain ATCC 36239 / CBS 767 / BCRC 21394 / JCM 1990 / NBRC 0083 / IGC 2968) (Yeast)).